Reading from the N-terminus, the 627-residue chain is Sphingomyelin phosphodiesterase (627 aa).

An N-terminal signal peptide occupies residues 1 to 44; it reads MPHHRASSGQDHLRAGWEQRLERSLPAPRVGLLWMGLGLALVLA. The region spanning 83–167 is the Saposin B-type domain; the sequence is QNLTCPACKV…LLGSSCGHWD (85 aa). Asparagine 84 carries an N-linked (GlcNAc...) asparagine glycan. Disulfide bonds link cysteine 87/cysteine 163, cysteine 90/cysteine 155, and cysteine 118/cysteine 129. N-linked (GlcNAc...) asparagine glycosylation is present at asparagine 173. Zn(2+) contacts are provided by aspartate 204 and histidine 206. 2 disulfide bridges follow: cysteine 219–cysteine 224 and cysteine 225–cysteine 248. Zn(2+)-binding residues include aspartate 276 and asparagine 316. Asparagine 333 and asparagine 393 each carry an N-linked (GlcNAc...) asparagine glycan. Cysteine 383 and cysteine 429 form a disulfide bridge. Residues histidine 423, histidine 455, and histidine 457 each contribute to the Zn(2+) site. Position 506 is a phosphoserine (serine 506). Asparagine 518 is a glycosylation site (N-linked (GlcNAc...) asparagine). Cystine bridges form between cysteine 582-cysteine 586 and cysteine 592-cysteine 605. Residue asparagine 611 is glycosylated (N-linked (GlcNAc...) asparagine).

The protein belongs to the acid sphingomyelinase family. As to quaternary structure, monomer. Interacts with SORT1; the interaction is required for SMPD1 targeting to lysosomes. Requires Zn(2+) as cofactor. In terms of processing, proteolytically processed. Mature lysosomal form arises from C-terminal proteolytic processing of pro-sphingomyelin phosphodiesterase. Both lysosomal and secreted forms are glycosylated but they show a differential pattern of glycosylation. Post-translationally, phosphorylated at Ser-506 by PRKCD upon stress stimuli. Phosphorylation is required for secretion. In terms of processing, this form is generated following cleavage by CASP7 in the extracellular milieu. It shows increased activity.

It is found in the lysosome. The protein localises to the lipid droplet. The protein resides in the secreted. It localises to the extracellular space. It carries out the reaction a sphingomyelin + H2O = phosphocholine + an N-acylsphing-4-enine + H(+). It catalyses the reaction N-(octadecanoyl)-sphing-4-enine-1-phosphocholine + H2O = N-octadecanoylsphing-4-enine + phosphocholine + H(+). The enzyme catalyses a 1,2-diacyl-sn-glycero-3-phosphocholine + H2O = phosphocholine + a 1,2-diacyl-sn-glycerol + H(+). The catalysed reaction is 1,2-dihexadecanoyl-sn-glycero-3-phosphocholine + H2O = 1,2-dihexadecanoyl-sn-glycerol + phosphocholine + H(+). Its activity is regulated as follows. Hydrolysis of liposomal sphingomyelin is stimulated by incorporation of diacylglycerol (DAG), ceramide and free fatty acids into the liposomal membranes. Phosphatidylcholine hydrolysis is inhibited by incorporation of cholesterol, ceramide, DAG, monoacylglycerol and fatty acids. Its function is as follows. Converts sphingomyelin to ceramide. Exists as two enzymatic forms that arise from alternative trafficking of a single protein precursor, one that is targeted to the endolysosomal compartment, whereas the other is released extracellularly. However, in response to various forms of stress, lysosomal exocytosis may represent a major source of the secretory form. Functionally, in the lysosomes, converts sphingomyelin to ceramide. Plays an important role in the export of cholesterol from the intraendolysosomal membranes. Also has phospholipase C activities toward 1,2-diacylglycerolphosphocholine and 1,2-diacylglycerolphosphoglycerol. Modulates stress-induced apoptosis through the production of ceramide. When secreted, modulates cell signaling with its ability to reorganize the plasma membrane by converting sphingomyelin to ceramide. Secreted form is increased in response to stress and inflammatory mediators such as IL1B, IFNG or TNF as well as upon infection with bacteria and viruses. Produces the release of ceramide in the outer leaflet of the plasma membrane playing a central role in host defense. Ceramide reorganizes these rafts into larger signaling platforms that are required to internalize P.aeruginosa, induce apoptosis and regulate the cytokine response in infected cells. In wounded cells, the lysosomal form is released extracellularly in the presence of Ca(2+) and promotes endocytosis and plasma membrane repair. In terms of biological role, this form is generated following cleavage by CASP7 in the extracellular milieu in response to bacterial infection. It shows increased ability to convert sphingomyelin to ceramide and promotes plasma membrane repair. Plasma membrane repair by ceramide counteracts the action of gasdermin-D (GSDMD) perforin (PRF1) pores that are formed in response to bacterial infection. Its function is as follows. (Microbial infection) Secretion is activated by bacteria such as P.aeruginosa, this activation results in the release of ceramide in the outer leaflet of the plasma membrane which facilitates the infection. The chain is Sphingomyelin phosphodiesterase from Mus musculus (Mouse).